The primary structure comprises 379 residues: Chaperone protein DnaJ 2 (379 aa).

In terms of domain architecture, J spans 4-68 (DYYAVLGVRR…QKKQVYDLGG (65 aa)). The CR-type zinc finger occupies 130–212 (GTTKDIQVDT…CAGDGRVPSR (83 aa)). C143, C146, C160, C163, C186, C189, C200, and C203 together coordinate Zn(2+). CXXCXGXG motif repeat units lie at residues 143 to 150 (CNTCNGEG), 160 to 167 (CDMCRGRG), 186 to 193 (CPQCQGFA), and 200 to 207 (CPECAGDG). The tract at residues 351-379 (RGEERPTGQFQPGQQGLFSRLKDAFNGRS) is disordered. Over residues 358–367 (GQFQPGQQGL) the composition is skewed to polar residues. The segment covering 370–379 (RLKDAFNGRS) has biased composition (basic and acidic residues).

It belongs to the DnaJ family. Homodimer. Zn(2+) is required as a cofactor.

The protein localises to the cytoplasm. Functionally, participates actively in the response to hyperosmotic and heat shock by preventing the aggregation of stress-denatured proteins and by disaggregating proteins, also in an autonomous, DnaK-independent fashion. Unfolded proteins bind initially to DnaJ; upon interaction with the DnaJ-bound protein, DnaK hydrolyzes its bound ATP, resulting in the formation of a stable complex. GrpE releases ADP from DnaK; ATP binding to DnaK triggers the release of the substrate protein, thus completing the reaction cycle. Several rounds of ATP-dependent interactions between DnaJ, DnaK and GrpE are required for fully efficient folding. Also involved, together with DnaK and GrpE, in the DNA replication of plasmids through activation of initiation proteins. In Streptomyces albus G, this protein is Chaperone protein DnaJ 2.